The sequence spans 2177 residues: Mediator of RNA polymerase II transcription subunit 12 (2177 aa).

Residues arginine 12 to glutamate 35 are disordered. An N6-acetyllysine modification is found at lysine 80. Position 166 is a phosphotyrosine (tyrosine 166). Disordered regions lie at residues glutamine 323–threonine 344, glycine 627–aspartate 669, threonine 690–lysine 717, and threonine 1241–arginine 1266. 4 positions are modified to phosphoserine: serine 635, serine 665, serine 698, and serine 700. The span at glutamate 702–lysine 717 shows a compositional bias: basic and acidic residues. Phosphoserine is present on residues serine 1258 and serine 1269. A compositionally biased stretch (low complexity) spans alanine 1394–serine 1411. Disordered stretches follow at residues alanine 1394–proline 1415, glutamate 1450–serine 1474, and tyrosine 1738–isoleucine 1829. Composition is skewed to basic and acidic residues over residues glutamate 1450 to lysine 1469 and glutamate 1758 to lysine 1771. Residues leucine 1616–glutamine 2051 are interaction with CTNNB1 and GLI3. Basic residues predominate over residues lysine 1784–serine 1793. An N6-acetyllysine modification is found at lysine 1798. Arginine 1899 bears the Asymmetric dimethylarginine; alternate mark. Arginine 1899 is subject to Omega-N-methylarginine; alternate. Arginine 1910 bears the Omega-N-methylarginine mark. Disordered regions lie at residues glutamine 1919 to leucine 1938 and serine 1967 to arginine 1989. The span at valine 1927–leucine 1938 shows a compositional bias: polar residues. Over residues serine 1967 to threonine 1980 the composition is skewed to low complexity. Arginine 1994 and arginine 2015 each carry asymmetric dimethylarginine. Composition is skewed to low complexity over residues glutamine 2115–alanine 2125, serine 2133–glutamine 2149, and leucine 2158–threonine 2171. Disordered regions lie at residues glutamine 2115–glutamine 2149 and leucine 2158–tyrosine 2177.

It belongs to the Mediator complex subunit 12 family. In terms of assembly, component of the Mediator complex, which is composed of MED1, MED4, MED6, MED7, MED8, MED9, MED10, MED11, MED12, MED13, MED13L, MED14, MED15, MED16, MED17, MED18, MED19, MED20, MED21, MED22, MED23, MED24, MED25, MED26, MED27, MED29, MED30, MED31, CCNC, CDK8 and CDC2L6/CDK11. The MED12, MED13, CCNC and CDK8 subunits form a distinct module termed the CDK8 module. Mediator containing the CDK8 module is less active than Mediator lacking this module in supporting transcriptional activation. Individual preparations of the Mediator complex lacking one or more distinct subunits have been variously termed ARC, CRSP, DRIP, PC2, SMCC and TRAP. Also interacts with CTNNB1 and GLI3. In terms of tissue distribution, ubiquitous.

Its subcellular location is the nucleus. Component of the Mediator complex, a coactivator involved in the regulated transcription of nearly all RNA polymerase II-dependent genes. Mediator functions as a bridge to convey information from gene-specific regulatory proteins to the basal RNA polymerase II transcription machinery. Mediator is recruited to promoters by direct interactions with regulatory proteins and serves as a scaffold for the assembly of a functional pre-initiation complex with RNA polymerase II and the general transcription factors. This subunit may specifically regulate transcription of targets of the Wnt signaling pathway and SHH signaling pathway. The chain is Mediator of RNA polymerase II transcription subunit 12 (MED12) from Homo sapiens (Human).